Reading from the N-terminus, the 137-residue chain is MGDNQDMGKSFLETVKFDDRGLVPAIVQDQETGKVLMMAWMNLESLQMTLDKKRACYWSRSRNKLWLKGESSGNMQVVHDILIDCDGDTLLLKVSQTGGACHVGYHSCFYRKATEALSMEICDTLMFNPEDVYGKKS.

Asp-84 contributes to the Mg(2+) binding site. Cys-85 is a Zn(2+) binding site. Residues Asp-86 and Asp-88 each contribute to the Mg(2+) site. Cys-101 and Cys-108 together coordinate Zn(2+).

This sequence belongs to the PRA-CH family. As to quaternary structure, homodimer. Requires Mg(2+) as cofactor. It depends on Zn(2+) as a cofactor.

It localises to the cytoplasm. It catalyses the reaction 1-(5-phospho-beta-D-ribosyl)-5'-AMP + H2O = 1-(5-phospho-beta-D-ribosyl)-5-[(5-phospho-beta-D-ribosylamino)methylideneamino]imidazole-4-carboxamide. It participates in amino-acid biosynthesis; L-histidine biosynthesis; L-histidine from 5-phospho-alpha-D-ribose 1-diphosphate: step 3/9. In terms of biological role, catalyzes the hydrolysis of the adenine ring of phosphoribosyl-AMP. The chain is Phosphoribosyl-AMP cyclohydrolase from Pelodictyon phaeoclathratiforme (strain DSM 5477 / BU-1).